The following is a 355-amino-acid chain: UDP-N-acetylglucosamine--N-acetylmuramyl-(pentapeptide) pyrophosphoryl-undecaprenol N-acetylglucosamine transferase (355 aa).

UDP-N-acetyl-alpha-D-glucosamine-binding positions include 14-16, Asn-126, Arg-162, Ser-190, Ile-243, 262-267, and Gln-287; these read TGG and ALTVSE.

It belongs to the glycosyltransferase 28 family. MurG subfamily.

The protein resides in the cell inner membrane. It carries out the reaction di-trans,octa-cis-undecaprenyl diphospho-N-acetyl-alpha-D-muramoyl-L-alanyl-D-glutamyl-meso-2,6-diaminopimeloyl-D-alanyl-D-alanine + UDP-N-acetyl-alpha-D-glucosamine = di-trans,octa-cis-undecaprenyl diphospho-[N-acetyl-alpha-D-glucosaminyl-(1-&gt;4)]-N-acetyl-alpha-D-muramoyl-L-alanyl-D-glutamyl-meso-2,6-diaminopimeloyl-D-alanyl-D-alanine + UDP + H(+). It participates in cell wall biogenesis; peptidoglycan biosynthesis. In terms of biological role, cell wall formation. Catalyzes the transfer of a GlcNAc subunit on undecaprenyl-pyrophosphoryl-MurNAc-pentapeptide (lipid intermediate I) to form undecaprenyl-pyrophosphoryl-MurNAc-(pentapeptide)GlcNAc (lipid intermediate II). This is UDP-N-acetylglucosamine--N-acetylmuramyl-(pentapeptide) pyrophosphoryl-undecaprenol N-acetylglucosamine transferase from Vibrio parahaemolyticus serotype O3:K6 (strain RIMD 2210633).